Consider the following 3491-residue polypeptide: Genome polyprotein (3491 aa).

A Fe2OG dioxygenase domain is found at 183–277 (KYNTALVQVY…RISITFRNQI (95 aa)). Residues H201, D203, and H259 each contribute to the Fe cation site. R268 contributes to the 2-oxoglutarate binding site. Positions 559-588 (DSASDNDVETMKKSEKRRKRRKRNPPPVRQ) are disordered. Basic residues predominate over residues 572 to 582 (SEKRRKRRKRN). A Peptidase S30 domain is found at 589-745 (VITRAPVSNI…DCLADDYLQY (157 aa)). Active-site for P1 proteinase activity residues include H640, D651, and S692. The Peptidase C6 domain occupies 948–1070 (VHVPLEGLCF…RNGCQEYRVG (123 aa)). Active-site for helper component proteinase activity residues include C956 and H1029. The region spanning 1540 to 1692 (TLTSSVKREF…TMHPVEVVNM (153 aa)) is the Helicase ATP-binding domain. 1553 to 1560 (GFVGSGKS) is an ATP binding site. The DEAH box motif lies at 1642–1645 (DESH). One can recognise a Helicase C-terminal domain in the interval 1696–1869 (SFEDFAIGQR…NVPPIFDNVD (174 aa)). At Y2238 the chain carries O-(5'-phospho-RNA)-tyrosine. Residues 2354–2570 (GRSTIKSGNN…LDVGSNNAIR (217 aa)) form the Peptidase C4 domain. Catalysis depends on for nuclear inclusion protein A activity residues H2400, D2435, and C2504. In terms of domain architecture, RdRp catalytic spans 2850–2974 (FVYGTGDGSQ…AIHPDRESIL (125 aa)). Disordered regions lie at residues 3200–3279 (MPQA…RKGL) and 3471–3491 (RHTT…AMMA). Residues 3236-3248 (RLSPERIVRHDDD) show a composition bias toward basic and acidic residues. Residue T3473 is modified to Phosphothreonine.

This sequence belongs to the potyviridae genome polyprotein family. The cofactor is Fe(2+). In terms of processing, VPg is uridylylated by the polymerase and is covalently attached to the 5'-end of the genomic RNA. This uridylylated form acts as a nucleotide-peptide primer for the polymerase. Genome polyprotein of potyviruses undergoes post-translational proteolytic processing by the main proteinase NIa-pro resulting in the production of at least ten individual proteins. The P1 proteinase and the HC-pro cleave only their respective C-termini autocatalytically. 6K1 is essential for proper proteolytic separation of P3 from CI.

Its subcellular location is the host cytoplasmic vesicle. The protein localises to the virion. It carries out the reaction RNA(n) + a ribonucleoside 5'-triphosphate = RNA(n+1) + diphosphate. The catalysed reaction is Hydrolyzes glutaminyl bonds, and activity is further restricted by preferences for the amino acids in P6 - P1' that vary with the species of potyvirus, e.g. Glu-Xaa-Xaa-Tyr-Xaa-Gln-|-(Ser or Gly) for the enzyme from tobacco etch virus. The natural substrate is the viral polyprotein, but other proteins and oligopeptides containing the appropriate consensus sequence are also cleaved.. The enzyme catalyses Hydrolyzes a Gly-|-Gly bond at its own C-terminus, commonly in the sequence -Tyr-Xaa-Val-Gly-|-Gly, in the processing of the potyviral polyprotein.. Functionally, required for aphid transmission and also has proteolytic activity. Only cleaves a Gly-Gly dipeptide at its own C-terminus. Interacts with virions and aphid stylets. Acts as a suppressor of RNA-mediated gene silencing, also known as post-transcriptional gene silencing (PTGS), a mechanism of plant viral defense that limits the accumulation of viral RNAs. May have RNA-binding activity. Its function is as follows. Has helicase activity. It may be involved in replication. In terms of biological role, indispensable for virus replication. Reduces the abundance of host transcripts related to jasmonic acid biosynthesis therefore altering the host defenses. In order to increase its own stability, decreases host protein degradation pathways. Indispensable for virus replication. Functionally, mediates the cap-independent, EIF4E-dependent translation of viral genomic RNAs. Binds to the cap-binding site of host EIF4E and thus interferes with the host EIF4E-dependent mRNA export and translation. VPg-RNA directly binds EIF4E and is a template for transcription. Also forms trimeric complexes with EIF4E-EIF4G, which are templates for translation. Its function is as follows. Has RNA-binding and proteolytic activities. In terms of biological role, an RNA-dependent RNA polymerase that plays an essential role in the virus replication. Involved in aphid transmission, cell-to-cell and systemis movement, encapsidation of the viral RNA and in the regulation of viral RNA amplification. This chain is Genome polyprotein, found in Blackberry virus Y (isolate Blackberry plant/USA:Arkansas/C3ARK/2005) (BVY).